The primary structure comprises 142 residues: Hemoglobin subunit alpha (142 aa).

Positions 2–142 (VLSPADKTNV…VSTVLVSKYR (141 aa)) constitute a Globin domain. Serine 4 is subject to Phosphoserine. Residue lysine 8 is modified to N6-succinyllysine. Position 9 is a phosphothreonine (threonine 9). Lysine 12 carries the post-translational modification N6-succinyllysine. An N6-acetyllysine; alternate modification is found at lysine 17. Lysine 17 is modified (N6-succinyllysine; alternate). Tyrosine 25 bears the Phosphotyrosine mark. Serine 36 is modified (phosphoserine). Lysine 41 bears the N6-succinyllysine mark. Serine 50 bears the Phosphoserine mark. An O2-binding site is contributed by histidine 59. Histidine 88 is a binding site for heme b. Serine 103 is subject to Phosphoserine. Threonine 109 is modified (phosphothreonine). A phosphoserine mark is found at serine 125 and serine 132. Threonine 135 carries the post-translational modification Phosphothreonine. Serine 139 is subject to Phosphoserine.

It belongs to the globin family. As to quaternary structure, heterotetramer of two alpha chains and two beta chains. In terms of tissue distribution, red blood cells.

Involved in oxygen transport from the lung to the various peripheral tissues. Its function is as follows. Hemopressin acts as an antagonist peptide of the cannabinoid receptor CNR1. Hemopressin-binding efficiently blocks cannabinoid receptor CNR1 and subsequent signaling. The polypeptide is Hemoglobin subunit alpha (HBA) (Antrozous pallidus (Pallid bat)).